Here is a 392-residue protein sequence, read N- to C-terminus: S-adenosylmethionine synthase (392 aa).

Histidine 17 serves as a coordination point for ATP. Aspartate 19 is a binding site for Mg(2+). Glutamate 45 is a binding site for K(+). Glutamate 58 and glutamine 102 together coordinate L-methionine. The tract at residues 102 to 112 (QSADIAQGVDA) is flexible loop. Residues 169-171 (DAK), 235-236 (KF), aspartate 244, 250-251 (RK), alanine 267, and lysine 271 contribute to the ATP site. Aspartate 244 contacts L-methionine. Lysine 275 is an L-methionine binding site.

It belongs to the AdoMet synthase family. Homotetramer; dimer of dimers. Requires Mg(2+) as cofactor. K(+) is required as a cofactor.

The protein localises to the cytoplasm. It catalyses the reaction L-methionine + ATP + H2O = S-adenosyl-L-methionine + phosphate + diphosphate. It functions in the pathway amino-acid biosynthesis; S-adenosyl-L-methionine biosynthesis; S-adenosyl-L-methionine from L-methionine: step 1/1. Its function is as follows. Catalyzes the formation of S-adenosylmethionine (AdoMet) from methionine and ATP. The overall synthetic reaction is composed of two sequential steps, AdoMet formation and the subsequent tripolyphosphate hydrolysis which occurs prior to release of AdoMet from the enzyme. In Methylobacterium radiotolerans (strain ATCC 27329 / DSM 1819 / JCM 2831 / NBRC 15690 / NCIMB 10815 / 0-1), this protein is S-adenosylmethionine synthase.